Here is an 80-residue protein sequence, read N- to C-terminus: Exodeoxyribonuclease 7 small subunit (80 aa).

The protein belongs to the XseB family. Heterooligomer composed of large and small subunits.

The protein resides in the cytoplasm. It catalyses the reaction Exonucleolytic cleavage in either 5'- to 3'- or 3'- to 5'-direction to yield nucleoside 5'-phosphates.. Bidirectionally degrades single-stranded DNA into large acid-insoluble oligonucleotides, which are then degraded further into small acid-soluble oligonucleotides. This chain is Exodeoxyribonuclease 7 small subunit, found in Escherichia coli O139:H28 (strain E24377A / ETEC).